A 449-amino-acid chain; its full sequence is Tryptophan synthase beta chain 2 (449 aa).

Lysine 116 bears the N6-(pyridoxal phosphate)lysine mark.

This sequence belongs to the TrpB family. In terms of assembly, tetramer of two alpha and two beta chains. It depends on pyridoxal 5'-phosphate as a cofactor.

It carries out the reaction (1S,2R)-1-C-(indol-3-yl)glycerol 3-phosphate + L-serine = D-glyceraldehyde 3-phosphate + L-tryptophan + H2O. The protein operates within amino-acid biosynthesis; L-tryptophan biosynthesis; L-tryptophan from chorismate: step 5/5. Functionally, the beta subunit is responsible for the synthesis of L-tryptophan from indole and L-serine. The sequence is that of Tryptophan synthase beta chain 2 (trpB2) from Aeropyrum pernix (strain ATCC 700893 / DSM 11879 / JCM 9820 / NBRC 100138 / K1).